Here is a 753-residue protein sequence, read N- to C-terminus: Centromere protein I (753 aa).

Basic residues predominate over residues 1–15 (MQRRQSSKHSKRPLQ). Residues 1 to 54 (MQRRQSSKHSKRPLQVHHSNQTDLSAWRKGGTVDTEKSAQNRQSLSDQKNDNEQ) are disordered.

The protein belongs to the CENP-I/CTF3 family. As to quaternary structure, component of the CENPA-HI complex, at least composed of CENPH, CENPI, CENPK, CENPL, CENPM, CENPO and CENPP.

The protein resides in the nucleus. It localises to the chromosome. Its subcellular location is the centromere. Its function is as follows. Component of the CENPA-HI complex, a centromeric complex involved in assembly of kinetochore proteins, mitotic progression and chromosome segregation. Required for the localization of CENPC but not CENPA to the centromere. It however may be involved in incorporation of newly synthesized CENPA into centromeres via its interaction with the CENPA-NAC complex. The sequence is that of Centromere protein I (CENPI) from Gallus gallus (Chicken).